The following is a 239-amino-acid chain: Ribonuclease HII (239 aa).

The RNase H type-2 domain maps to 30–221 (GPVAGVDEVG…VRRLVTAGTP (192 aa)). 3 residues coordinate a divalent metal cation: D36, E37, and D130.

The protein belongs to the RNase HII family. It depends on Mn(2+) as a cofactor. Requires Mg(2+) as cofactor.

It is found in the cytoplasm. The catalysed reaction is Endonucleolytic cleavage to 5'-phosphomonoester.. Endonuclease that specifically degrades the RNA of RNA-DNA hybrids. The polypeptide is Ribonuclease HII (Mycobacterium sp. (strain KMS)).